The primary structure comprises 705 residues: Beta-xylosidase (705 aa).

This sequence belongs to the glycosyl hydrolase 52 family.

The catalysed reaction is Hydrolysis of (1-&gt;4)-beta-D-xylans, to remove successive D-xylose residues from the non-reducing termini.. It functions in the pathway glycan degradation; xylan degradation. The protein is Beta-xylosidase (xylA) of Geobacillus stearothermophilus (Bacillus stearothermophilus).